The chain runs to 88 residues: MGTARFLRAVLLLSVLLMVTFPALLSAEHHDGRVDICRLPSDSGDCLRFFEMWYFDGTTCTKFVYGGYGGNDNRFPTEKACMKRCAKA.

An N-terminal signal peptide occupies residues 1 to 27 (MGTARFLRAVLLLSVLLMVTFPALLSA). Residues 28-33 (EHHDGR) constitute a propeptide that is removed on maturation. In terms of domain architecture, BPTI/Kunitz inhibitor spans 37–85 (CRLPSDSGDCLRFFEMWYFDGTTCTKFVYGGYGGNDNRFPTEKACMKRC). 2 cysteine pairs are disulfide-bonded: Cys-37-Cys-85 and Cys-60-Cys-81.

It belongs to the venom Kunitz-type family. 03 (sub-Kunitz) subfamily. Expressed by the venom gland.

It is found in the secreted. Serine protease inhibitor that inhibits trypsin at a molar ratio of 1:1. The chain is Kunitz-type U15-theraphotoxin-Hhn1a from Cyriopagopus hainanus (Chinese bird spider).